The chain runs to 148 residues: Large ribosomal subunit protein bL9 (148 aa).

It belongs to the bacterial ribosomal protein bL9 family.

Functionally, binds to the 23S rRNA. In Thermus thermophilus (strain ATCC BAA-163 / DSM 7039 / HB27), this protein is Large ribosomal subunit protein bL9.